The chain runs to 251 residues: Appressoria-specific virulence factor GAS1 (251 aa).

Residues 1-21 (MSLKSLIAATILAAPLVAGHG) form the signal peptide. A disordered region spans residues 40–76 (VTSTPRDGTRRDPFQQDSTRFKGQQADTFGETVGGGQ). The span at 54 to 66 (QQDSTRFKGQQAD) shows a compositional bias: polar residues.

Its subcellular location is the cytoplasm. In terms of biological role, appressoria-specific virulence factor required for appressorial penetration in host and lesion development. The protein is Appressoria-specific virulence factor GAS1 of Pyricularia oryzae (strain 70-15 / ATCC MYA-4617 / FGSC 8958) (Rice blast fungus).